A 526-amino-acid polypeptide reads, in one-letter code: Fluoride export protein 1 (526 aa).

Disordered regions lie at residues 1 to 73 (MMTA…RRAS) and 90 to 149 (ASNI…KQAG). Residues 1-159 (MMTAPSDTEG…VVAKRQKVSR (159 aa)) are Cytoplasmic-facing. Basic and acidic residues-rich tracts occupy residues 21-36 (SPDR…DHNH) and 103-123 (PITR…YLRE). A helical transmembrane segment spans residues 160–180 (LATELYTISYLIFFSLLGTLA). The Extracellular segment spans residues 181–194 (RLGLQALTSAYPQS). Residues 195–215 (PIIFPSIWPNFAGCVVMGFLA) traverse the membrane as a helical segment. Topologically, residues 216–260 (EDRMLFRPDWGQQQPNPKKDDDDDEEAKDIDPAAAKKAHMALKKT) are cytoplasmic. The interval 223–242 (PDWGQQQPNPKKDDDDDEEA) is disordered. A helical transmembrane segment spans residues 261–281 (IPLYVGLATGFCGSFTSFSSF). The Extracellular portion of the chain corresponds to 282–310 (IRDIYLALSNDLAAHGSSAAPVSRNGGYS). The helical transmembrane segment at 311 to 331 (FMALLAVTITTISLSLSGLFA) threads the bilayer. Residues 332–361 (GAHLAIAIATLFTRFDLGLPYTFVSRILDR) lie on the Cytoplasmic side of the membrane. The helical transmembrane segment at 362-382 (LIVLLGFGCWLGAVLLSIWPP) threads the bilayer. Topologically, residues 383–398 (DRHSAQPEKERWRGTA) are extracellular. The chain crosses the membrane as a helical span at residues 399–419 (TFALVFAPLGCLTRFYASAHL). The Cytoplasmic segment spans residues 420 to 424 (NGRLP). A helical membrane pass occupies residues 425–445 (SFPLGTFVVNMLGTAVLGMAW). Residues 446 to 452 (DLNHVPS) lie on the Extracellular side of the membrane. Residues 453–473 (LGGVVGCQVLQGVADGFCGCL) form a helical membrane-spanning segment. The Cytoplasmic portion of the chain corresponds to 474-492 (TTVSTWVSELAALRRRHAY). Residues 493 to 513 (VYGGASVGGGLALMVVVMGSL) traverse the membrane as a helical segment. At 514-526 (RWTEGFGEVKCIS) the chain is on the extracellular side.

It belongs to the fluoride channel Fluc/FEX (TC 1.A.43) family.

The protein localises to the cell membrane. The catalysed reaction is fluoride(in) = fluoride(out). Fluoride channel required for the rapid expulsion of cytoplasmic fluoride. In Neurospora crassa (strain ATCC 24698 / 74-OR23-1A / CBS 708.71 / DSM 1257 / FGSC 987), this protein is Fluoride export protein 1.